A 338-amino-acid chain; its full sequence is MAEFEIPDFYVPFPLECNPHLEEASRAMWEWIDANGLAPTERARDRMRRTGADLSGAYVWPRADLDTLTIGLKWIALTFRIDDQIDEDDTAERLPARMTAIDELRGTLHGLPVSGRSPTARALGALWQETALGRPATWCDAFIGHFEAFLQTYTTEAGLNAHGAGLRLDDYLDRRMYSVGMPWLWDLDELRLPIFLPGSVRTCGPMNKLRRAGALHIALVNDVFSVERETLVGYQHNAVTIIREAQGCSLQEAVDQVAVLVEAQLHTVLQARQELLEELDRQALPSRAREAAVDYAANVAANLSGQLVWHSSVERYAVDDLQSAADPRATPTTSSLGI.

Mg(2+)-binding residues include Asp82 and Glu87. A DDXXXE motif motif is present at residues 82-87 (DDQIDE). Residue Arg175 coordinates substrate. Asn221 and Ser225 together coordinate Mg(2+). An NXXXSXXXE motif motif is present at residues 221–229 (NDVFSVERE). Substrate is bound at residue Arg228. Glu229 lines the Mg(2+) pocket.

This sequence belongs to the terpene synthase family. Homodimer. Mg(2+) is required as a cofactor.

The catalysed reaction is (2E,6E)-farnesyl diphosphate + H2O = (2Z,6E)-hedycaryol + diphosphate. It functions in the pathway secondary metabolite biosynthesis; terpenoid biosynthesis. In terms of biological role, catalyzes the conversion of (2E,6E)-farnesyl diphosphate (FPP) into (2Z,6E)-hedycaryol via a 1,11-cyclization. In Kitasatospora setae (strain ATCC 33774 / DSM 43861 / JCM 3304 / KCC A-0304 / NBRC 14216 / KM-6054) (Streptomyces setae), this protein is (2Z,6E)-hedycaryol synthase.